The following is a 238-amino-acid chain: Uridylate kinase (238 aa).

Residue 12–15 (KLSG) coordinates ATP. Residue G54 coordinates UMP. 2 residues coordinate ATP: G55 and R59. UMP contacts are provided by residues D74 and 135–142 (TGNPFFTT). ATP is bound by residues T162, N163, Y168, and D171.

The protein belongs to the UMP kinase family. In terms of assembly, homohexamer.

The protein resides in the cytoplasm. The catalysed reaction is UMP + ATP = UDP + ADP. The protein operates within pyrimidine metabolism; CTP biosynthesis via de novo pathway; UDP from UMP (UMPK route): step 1/1. With respect to regulation, inhibited by UTP. Functionally, catalyzes the reversible phosphorylation of UMP to UDP. The polypeptide is Uridylate kinase (Rhodopseudomonas palustris (strain HaA2)).